We begin with the raw amino-acid sequence, 312 residues long: Bifunctional pinoresinol-lariciresinol reductase (312 aa).

Residues 10-16 (GGTGYLG), R35, and K44 contribute to the NADP(+) site. K139 (proton acceptor) is an active-site residue. Position 143 (R143) interacts with NADP(+). H271 contacts substrate.

Belongs to the NmrA-type oxidoreductase family. Isoflavone reductase subfamily. As to quaternary structure, dimer. In terms of tissue distribution, expressed in young stems, young roots and petioles. In stems, expressed in radial parenchyma cells and in the cambial cells of developing secondary xylem.

The enzyme catalyses (+)-lariciresinol + NADP(+) = (+)-pinoresinol + NADPH + H(+). It carries out the reaction (-)-secoisolariciresinol + NADP(+) = (+)-lariciresinol + NADPH + H(+). In terms of biological role, reductase involved in lignan biosynthesis. Catalyzes the enantioselective sequential conversion of (+)-pinoresinol into (+)-lariciresinol and of (+)-lariciresinol into (-)-secoisolariciresinol. Abstracts the 4R-hydride from the NADPH cofactor during catalysis. This Forsythia intermedia (Border forsythia) protein is Bifunctional pinoresinol-lariciresinol reductase (PLR_Fi1).